Reading from the N-terminus, the 297-residue chain is Ribosomal RNA small subunit methyltransferase H (297 aa).

S-adenosyl-L-methionine is bound by residues 37-39, Glu56, Phe87, Asp102, and His109; that span reads GGH.

This sequence belongs to the methyltransferase superfamily. RsmH family.

It localises to the cytoplasm. It catalyses the reaction cytidine(1402) in 16S rRNA + S-adenosyl-L-methionine = N(4)-methylcytidine(1402) in 16S rRNA + S-adenosyl-L-homocysteine + H(+). In terms of biological role, specifically methylates the N4 position of cytidine in position 1402 (C1402) of 16S rRNA. The sequence is that of Ribosomal RNA small subunit methyltransferase H from Borrelia duttonii (strain Ly).